We begin with the raw amino-acid sequence, 408 residues long: BTB/POZ and MATH domain-containing protein 3 (408 aa).

The region spanning 24–158 (NGSHQFTIQG…DDCLVINCTV (135 aa)) is the MATH domain. One can recognise a BTB domain in the interval 194 to 261 (CDIAFQVGDE…IYTDVLPNVH (68 aa)).

Belongs to the Tdpoz family. Homodimer or heterodimer with BPM3 and BPM5. Interacts with CUL3A and CUL3B. Interacts with RAP2-4 and RAP2-13. Binds to MYB56 at the promoter of FLOWERING LOCUS T (FT). As to expression, ubiquitous.

It localises to the nucleus. Its subcellular location is the cytoplasm. Its pathway is protein modification; protein ubiquitination. In terms of biological role, may act as a substrate-specific adapter of an E3 ubiquitin-protein ligase complex (CUL3-RBX1-BTB) which mediates the ubiquitination and subsequent proteasomal degradation of target proteins. The chain is BTB/POZ and MATH domain-containing protein 3 from Arabidopsis thaliana (Mouse-ear cress).